A 448-amino-acid polypeptide reads, in one-letter code: Tubulin beta chain (448 aa).

Residues glutamine 11, glutamate 69, serine 138, glycine 142, threonine 143, glycine 144, asparagine 204, and asparagine 226 each contribute to the GTP site. A Mg(2+)-binding site is contributed by glutamate 69. The segment at serine 429–glutamate 448 is disordered. The segment covering aspartate 432–glutamate 448 has biased composition (acidic residues).

It belongs to the tubulin family. As to quaternary structure, dimer of alpha and beta chains. A typical microtubule is a hollow water-filled tube with an outer diameter of 25 nm and an inner diameter of 15 nM. Alpha-beta heterodimers associate head-to-tail to form protofilaments running lengthwise along the microtubule wall with the beta-tubulin subunit facing the microtubule plus end conferring a structural polarity. Microtubules usually have 13 protofilaments but different protofilament numbers can be found in some organisms and specialized cells. The cofactor is Mg(2+).

The protein localises to the cytoplasm. It is found in the cytoskeleton. In terms of biological role, tubulin is the major constituent of microtubules, a cylinder consisting of laterally associated linear protofilaments composed of alpha- and beta-tubulin heterodimers. Microtubules grow by the addition of GTP-tubulin dimers to the microtubule end, where a stabilizing cap forms. Below the cap, tubulin dimers are in GDP-bound state, owing to GTPase activity of alpha-tubulin. In Aspergillus fumigatus (strain ATCC MYA-4609 / CBS 101355 / FGSC A1100 / Af293) (Neosartorya fumigata), this protein is Tubulin beta chain.